The sequence spans 210 residues: Ribosomal RNA small subunit methyltransferase G (210 aa).

S-adenosyl-L-methionine is bound by residues G77, F82, 100–102 (ERS), 128–129 (VE), and R141.

The protein belongs to the methyltransferase superfamily. RNA methyltransferase RsmG family.

The protein localises to the cytoplasm. In terms of biological role, specifically methylates the N7 position of a guanine in 16S rRNA. The chain is Ribosomal RNA small subunit methyltransferase G from Borrelia recurrentis (strain A1).